The primary structure comprises 43 residues: Protein PsbN (43 aa).

Residues 5–25 (LILSIFIFSLLLGITSYSIYI) traverse the membrane as a helical segment.

The protein belongs to the PsbN family.

Its subcellular location is the plastid. It localises to the chloroplast thylakoid membrane. Its function is as follows. May play a role in photosystem I and II biogenesis. In Cyanidium caldarium (Red alga), this protein is Protein PsbN.